Consider the following 372-residue polypeptide: Putative glutamate--cysteine ligase 2 (372 aa).

This sequence belongs to the glutamate--cysteine ligase type 2 family. YbdK subfamily.

The catalysed reaction is L-cysteine + L-glutamate + ATP = gamma-L-glutamyl-L-cysteine + ADP + phosphate + H(+). Functionally, ATP-dependent carboxylate-amine ligase which exhibits weak glutamate--cysteine ligase activity. The protein is Putative glutamate--cysteine ligase 2 of Gloeobacter violaceus (strain ATCC 29082 / PCC 7421).